The chain runs to 199 residues: Early nodulin-like protein 3 (199 aa).

Residues 1 to 23 form the signal peptide; the sequence is MGLVMRFDLYLMFVMLMGLGFTI. A Phytocyanin domain is found at 27-128; the sequence is YKFYVGGKDG…GQKLAVKVLS (102 aa). 2 N-linked (GlcNAc...) asparagine glycosylation sites follow: asparagine 57 and asparagine 83. An intrachain disulfide couples cysteine 82 to cysteine 116. The tract at residues 130-180 is disordered; the sequence is VHHSHSPRHTSPSPSPVHQELSSPGPSPGVEPSSDSNSRVPAPGPATAPNS. The segment covering 138-165 has biased composition (low complexity); sequence HTSPSPSPVHQELSSPGPSPGVEPSSDS. Residue asparagine 179 is the site of GPI-anchor amidated asparagine attachment. Positions 180–199 are cleaved as a propeptide — removed in mature form; it reads SAGLVGPGMVVLVIMISSLF.

It belongs to the early nodulin-like (ENODL) family. As to expression, confined to flowers.

The protein localises to the cell membrane. Functionally, may act as a carbohydrate transporter. The polypeptide is Early nodulin-like protein 3 (Arabidopsis thaliana (Mouse-ear cress)).